Reading from the N-terminus, the 200-residue chain is Prostamide/prostaglandin F synthase (200 aa).

It belongs to the peroxiredoxin-like PRXL2 family. Prostamide/prostaglandin F synthase subfamily.

The protein resides in the cytoplasm. Its subcellular location is the cytosol. The enzyme catalyses prostaglandin H2 + [thioredoxin]-dithiol = prostaglandin F2alpha + [thioredoxin]-disulfide. The catalysed reaction is prostamide F2alpha + [thioredoxin]-disulfide = prostamide H2 + [thioredoxin]-dithiol. Its function is as follows. Catalyzes the reduction of prostaglandin-ethanolamide H(2) (prostamide H(2)) to prostamide F(2alpha) with NADPH as proton donor. Also able to reduce prostaglandin H(2) to prostaglandin F(2alpha). In Salmo salar (Atlantic salmon), this protein is Prostamide/prostaglandin F synthase (prxl2b).